The sequence spans 353 residues: Peroxidase 34 (353 aa).

The N-terminal stretch at 1-30 (MHFSSSSTSSTWTILITLGCLMLHASLSAA) is a signal peptide. Gln31 is modified (pyrrolidone carboxylic acid). Intrachain disulfides connect Cys41-Cys121, Cys74-Cys79, Cys127-Cys331, and Cys207-Cys239. Asn43 carries an N-linked (GlcNAc...) asparagine glycan. His72 functions as the Proton acceptor in the catalytic mechanism. 5 residues coordinate Ca(2+): Asp73, Val76, Gly78, Asp80, and Ser82. An N-linked (GlcNAc...) asparagine glycan is attached at Asn87. Pro169 lines the substrate pocket. Heme b is bound at residue His200. Thr201 contributes to the Ca(2+) binding site. N-linked (GlcNAc...) asparagine glycosylation is found at Asn216, Asn228, and Asn244. 3 residues coordinate Ca(2+): Asp252, Thr255, and Asp260. Asn285 carries an N-linked (GlcNAc...) asparagine glycan.

The protein belongs to the peroxidase family. Classical plant (class III) peroxidase subfamily. Heme b is required as a cofactor. Requires Ca(2+) as cofactor. In terms of tissue distribution, preferentially expressed in roots, but also detected in flowers, leaves and stems.

The protein localises to the secreted. It localises to the vacuole. It carries out the reaction 2 a phenolic donor + H2O2 = 2 a phenolic radical donor + 2 H2O. Its function is as follows. Removal of H(2)O(2), oxidation of toxic reductants, biosynthesis and degradation of lignin, suberization, auxin catabolism, response to environmental stresses such as wounding, pathogen attack and oxidative stress. These functions might be dependent on each isozyme/isoform in each plant tissue. May be implicated in the systemic acquired resistance response via the salicylic acid signal transduction pathway. Exhibits a Ca(2+)-pectate binding affinity which could be interpreted in vivo as a specificity to interact with the pectic structure of the cell wall. This Arabidopsis thaliana (Mouse-ear cress) protein is Peroxidase 34 (PER34).